The primary structure comprises 536 residues: Multicopper oxidase CueO (536 aa).

The segment at residues methionine 1–alanine 28 is a signal peptide (tat-type signal). 3 consecutive Plastocyanin-like domains span residues lysine 53–aspartate 165, glycine 229–leucine 295, and phenylalanine 424–valine 536. Cu cation-binding residues include histidine 101, histidine 103, histidine 141, and histidine 143. Residues histidine 463, histidine 466, histidine 468, histidine 519, cysteine 520, histidine 521, and histidine 525 each coordinate Cu cation.

Belongs to the multicopper oxidase family. In terms of assembly, monomer. Cu cation serves as cofactor. In terms of processing, predicted to be exported by the Tat system. The position of the signal peptide cleavage has not been experimentally proven.

The protein resides in the periplasm. It catalyses the reaction 4 Cu(+) + O2 + 4 H(+) = 4 Cu(2+) + 2 H2O. Its function is as follows. Multicopper oxidase involved in copper homeostasis and copper tolerance under both aerobic and anaerobic conditions. Is responsible for the oxidation of Cu(+) to the less harmful Cu(2+) in the periplasm, thereby preventing Cu(+) from entering the cytoplasm. The chain is Multicopper oxidase CueO (cueO) from Salmonella typhimurium (strain LT2 / SGSC1412 / ATCC 700720).